The sequence spans 74 residues: UPF0154 protein LSL_0542 (74 aa).

The helical transmembrane segment at 5–25 (IWVLIVIIAAVLGFVGGFFAA) threads the bilayer.

The protein belongs to the UPF0154 family.

The protein resides in the cell membrane. The protein is UPF0154 protein LSL_0542 of Ligilactobacillus salivarius (strain UCC118) (Lactobacillus salivarius).